We begin with the raw amino-acid sequence, 27 residues long: Delta-conotoxin TxVIB (27 aa).

Intrachain disulfides connect Cys-2–Cys-17, Cys-9–Cys-21, and Cys-16–Cys-26.

It belongs to the conotoxin O1 superfamily. As to expression, expressed by the venom duct.

It localises to the secreted. In terms of biological role, delta-conotoxins bind to site 6 of voltage-gated sodium channels (Nav) and inhibit the inactivation process. Induces membrane depolarization and spontaneous repetitive firing of neurons. In Conus textile (Cloth-of-gold cone), this protein is Delta-conotoxin TxVIB.